The sequence spans 777 residues: Zinc finger FYVE domain-containing protein 1 (777 aa).

The segment at 416 to 777 (MAHSSFFPDE…FNCNKKPGDL (362 aa)) is required for localization in the lipid droplets. FYVE-type zinc fingers lie at residues 598–659 (NSQI…EARN) and 715–775 (DHEI…KKPG). Positions 604, 607, 620, 623, 628, 631, 651, 654, 721, 724, 737, 740, 745, 748, 767, and 770 each coordinate Zn(2+).

As to quaternary structure, interacts with RAB18 (in GTP-bound form). Interacts with BSCL2 in a RAB18-dependent manner. Interacts with ZW10. In terms of assembly, (Microbial infection) Interacts with SARS coronavirus-2/SARS-CoV-2 non-structural protein 6 (nsp6); the interaction is independent of PtdIns3P-binding and leads to endoplasmic reticulum (ER) and double membrane vesicles (DMVs) binding to lipid droplets. Highly expressed in heart. Also detected in the testis. In terms of tissue distribution, expressed in all tissues examined, including, brain, placenta, lung, liver, skeletal muscle, pancreas and kidney. Highly expressed in heart.

The protein resides in the golgi apparatus. It is found in the golgi stack. Its subcellular location is the endoplasmic reticulum. It localises to the lipid droplet. The protein localises to the preautophagosomal structure. The protein resides in the mitochondrion. Functionally, plays a role in the formation of lipid droplets (LDs) which are storage organelles at the center of lipid and energy homeostasis. Regulates the morphology, size and distribution of LDs. Mediates the formation of endoplasmic reticulum-lipid droplets (ER-LD) contacts by forming a complex with RAB18 and ZW10. Binds to phosphatidylinositol 3-phosphate (PtdIns3P) through FYVE-type zinc finger. (Microbial infection) Upon SARS coronavirus-2/SARS-CoV-2 infection, mediates through binding with non-structural protein 6 (nsp6) the replication organelle-lipid droplet association required to sustain viral replication. This Homo sapiens (Human) protein is Zinc finger FYVE domain-containing protein 1 (ZFYVE1).